The chain runs to 635 residues: Threonine--tRNA ligase (635 aa).

The 61-residue stretch at 1–61 (MITVRLPDGS…EKDSDLAIIT (61 aa)) folds into the TGS domain. The catalytic stretch occupies residues 242 to 533 (DHRKLGKQLD…LIEHYAGALP (292 aa)). The Zn(2+) site is built by Cys-333, His-384, and His-510.

This sequence belongs to the class-II aminoacyl-tRNA synthetase family. In terms of assembly, homodimer. The cofactor is Zn(2+).

The protein localises to the cytoplasm. It carries out the reaction tRNA(Thr) + L-threonine + ATP = L-threonyl-tRNA(Thr) + AMP + diphosphate + H(+). In terms of biological role, catalyzes the attachment of threonine to tRNA(Thr) in a two-step reaction: L-threonine is first activated by ATP to form Thr-AMP and then transferred to the acceptor end of tRNA(Thr). Also edits incorrectly charged L-seryl-tRNA(Thr). This is Threonine--tRNA ligase from Janthinobacterium sp. (strain Marseille) (Minibacterium massiliensis).